We begin with the raw amino-acid sequence, 218 residues long: Dehydration-responsive element-binding protein 1B (218 aa).

The interval 1–26 (MEVEEAAYRTVWSEPPKRPAGRTKFR) is disordered. A DNA-binding region (AP2/ERF) is located at residues 32 to 95 (VYRGVRRRGG…RGRAACLNFA (64 aa)). The tract at residues 131 to 151 (SAAPSSPAETFANDGDEEEDN) is disordered.

The protein belongs to the AP2/ERF transcription factor family. ERF subfamily.

The protein localises to the nucleus. In terms of biological role, transcriptional activator that binds specifically to the DNA sequence 5'-[AG]CCGAC-3'. Binding to the C-repeat/DRE element mediates high salinity- and dehydration-inducible transcription. Confers resistance to high salt, cold and drought stress. This chain is Dehydration-responsive element-binding protein 1B (DREB1B), found in Oryza sativa subsp. japonica (Rice).